The sequence spans 154 residues: Myoglobin (154 aa).

The Globin domain occupies 2–148 (VLSEGEWQLV…FRKDIAAKYK (147 aa)). Ser-4 is modified (phosphoserine). His-65 provides a ligand contact to nitrite. His-65 is an O2 binding site. A Phosphothreonine modification is found at Thr-68. His-94 contacts heme b.

This sequence belongs to the globin family. Monomeric.

It is found in the cytoplasm. The protein localises to the sarcoplasm. The enzyme catalyses Fe(III)-heme b-[protein] + nitric oxide + H2O = Fe(II)-heme b-[protein] + nitrite + 2 H(+). It carries out the reaction H2O2 + AH2 = A + 2 H2O. Functionally, monomeric heme protein which primary function is to store oxygen and facilitate its diffusion within muscle tissues. Reversibly binds oxygen through a pentacoordinated heme iron and enables its timely and efficient release as needed during periods of heightened demand. Depending on the oxidative conditions of tissues and cells, and in addition to its ability to bind oxygen, it also has a nitrite reductase activity whereby it regulates the production of bioactive nitric oxide. Under stress conditions, like hypoxia and anoxia, it also protects cells against reactive oxygen species thanks to its pseudoperoxidase activity. In Kogia breviceps (Pygmy sperm whale), this protein is Myoglobin (MB).